A 464-amino-acid chain; its full sequence is Protein phosphatase 2C homolog 2 (464 aa).

One can recognise a PPM-type phosphatase domain in the interval 23–292 (AFGLCAMQGW…DNMSIVVVAL (270 aa)). 4 residues coordinate Mn(2+): Asp62, Gly63, Asp234, and Asp283. Positions 174-355 (DGFVEMDRVN…KPQDKFTRDH (182 aa)) are interaction with IRE1. 2 disordered regions span residues 361–398 (SVTAADNDDPMDIDDTDADTDAENLDPSSQSKSKTSGP) and 434–464 (QLLQTMGHDPASSHPENDSNTDHKAGRSHLQ). Residues 366–384 (DNDDPMDIDDTDADTDAEN) show a composition bias toward acidic residues. A phosphothreonine mark is found at Thr376 and Thr380. The span at 386–396 (DPSSQSKSKTS) shows a compositional bias: polar residues. Over residues 448 to 458 (PENDSNTDHKA) the composition is skewed to basic and acidic residues.

The protein belongs to the PP2C family. As to quaternary structure, interacts with IRE1 (when phosphorylated); the interaction is direct and serves to attenuate the endoplasmic reticulum unfolded protein response. Interacts (when phosphorylated) with RAD53 (via domain FHA 1); the interaction is direct and serves to regulate DNA damage checkpoint signaling. Interacts with the ATG17-ATG29-ATG31 and ATG1-ATG13 supercomplex; to regulate induction of autophagy. The cofactor is Mg(2+). Requires Mn(2+) as cofactor.

It is found in the nucleus. The protein resides in the cytoplasm. It localises to the cytosol. It carries out the reaction O-phospho-L-seryl-[protein] + H2O = L-seryl-[protein] + phosphate. It catalyses the reaction O-phospho-L-threonyl-[protein] + H2O = L-threonyl-[protein] + phosphate. Its function is as follows. Dephosphorylating regulator for many key proteins. Dephosphorylates the cell cycle master regulator CDC28/cyclin-dependent kinase 1; its activity appears redundant with phosphatase PTC3. Dephosphorylates HOG1 at 'Thr-171', to attenuate activation of the stress-activated p38MAPK cascade; its activity appears redundant with phosphatase PTC3. Positively regulates both nonselective macroautophagy as well as the selective cytoplasm-to-vacuole (cvt) autophagy pathway and the genotoxin-induced targeted autophagy (GTA) pathway, possibly by dephosphorylating ATG13 to enable the interaction between the ATG17-ATG29-ATG31 and ATG1-ATG13 complexes; its activity appears redundant with phosphatase PTC3. Dephosphorylates RAD53, to regulate DNA damage checkpoint signaling. Dephosphorylates IRE1, to negatively regulate the endoplasmic reticulum unfolded protein response. This Saccharomyces cerevisiae (strain ATCC 204508 / S288c) (Baker's yeast) protein is Protein phosphatase 2C homolog 2 (PTC2).